The sequence spans 422 residues: uncharacterized protein (422 aa).

Disordered regions lie at residues 1–21, 158–218, and 246–271; these read MRDN…TTYD, TAKS…TEQV, and DFGT…PWLT. The span at 11–21 shows a compositional bias: polar residues; that stretch reads AGSNTQQTTYD. The segment covering 170–199 has biased composition (low complexity); it reads SKSSNGSSSTSTTQRGGSSNENKVKALQVA. 2 stretches are compositionally biased toward polar residues: residues 205 to 216 and 250 to 261; these read GSQGNSGDQGTE and APSSSGSGTQDG. Residues 262 to 271 are compositionally biased toward low complexity; it reads TPTPWTPWLT.

It belongs to the adhesin P1 family.

This is an uncharacterized protein from Mycoplasma pneumoniae (strain ATCC 29342 / M129 / Subtype 1) (Mycoplasmoides pneumoniae).